The primary structure comprises 355 residues: Lipoyl synthase (355 aa).

The 49-residue stretch at 7–55 (HLSKFAYREEFAGNTEVLATAAYKEDCADASTGLTPKLPLEVEFGKMSK) folds into the RPE1 insert domain. 7 residues coordinate [4Fe-4S] cluster: Cys86, Cys91, Cys97, Cys112, Cys116, Cys119, and Ser325. The Radical SAM core domain occupies 98–314 (WSKKHATVMI…ERVARTKGFL (217 aa)).

Belongs to the radical SAM superfamily. Lipoyl synthase family. It depends on [4Fe-4S] cluster as a cofactor.

The protein localises to the cytoplasm. The catalysed reaction is [[Fe-S] cluster scaffold protein carrying a second [4Fe-4S](2+) cluster] + N(6)-octanoyl-L-lysyl-[protein] + 2 oxidized [2Fe-2S]-[ferredoxin] + 2 S-adenosyl-L-methionine + 4 H(+) = [[Fe-S] cluster scaffold protein] + N(6)-[(R)-dihydrolipoyl]-L-lysyl-[protein] + 4 Fe(3+) + 2 hydrogen sulfide + 2 5'-deoxyadenosine + 2 L-methionine + 2 reduced [2Fe-2S]-[ferredoxin]. Its pathway is protein modification; protein lipoylation via endogenous pathway; protein N(6)-(lipoyl)lysine from octanoyl-[acyl-carrier-protein]: step 2/2. Catalyzes the radical-mediated insertion of two sulfur atoms into the C-6 and C-8 positions of the octanoyl moiety bound to the lipoyl domains of lipoate-dependent enzymes, thereby converting the octanoylated domains into lipoylated derivatives. This chain is Lipoyl synthase, found in Rickettsia bellii (strain RML369-C).